We begin with the raw amino-acid sequence, 379 residues long: Transcription termination factor Rho (379 aa).

Positions 1 to 68 (MTDKYGFLRS…KRIFQINGRF (68 aa)) constitute a Rho RNA-BD domain. ATP contacts are provided by residues 111 to 116 (GKGQRG), 123 to 128 (KTGKTT), and Arg154.

The protein belongs to the Rho family. As to quaternary structure, homohexamer. The homohexamer assembles into an open ring structure.

Functionally, facilitates transcription termination by a mechanism that involves Rho binding to the nascent RNA, activation of Rho's RNA-dependent ATPase activity, and release of the mRNA from the DNA template. The chain is Transcription termination factor Rho from Karelsulcia muelleri (strain SMDSEM) (Sulcia muelleri).